Reading from the N-terminus, the 90-residue chain is Small ribosomal subunit protein bS16 (90 aa).

This sequence belongs to the bacterial ribosomal protein bS16 family.

This chain is Small ribosomal subunit protein bS16, found in Geobacillus thermodenitrificans (strain NG80-2).